The primary structure comprises 396 residues: MMPRYCAAICCKNRRGRNNKDRKLSFYPFPLHDKERLEKWLKNMKRDSWVPSKYQFLCSDHFTPDSLDIRWGIRYLKQTAVPTIFSLPEDNQGKDPSKKKSQKKNLEDEKEVCPKAKSEESFVLNETKKNIVNTNVPPQHPELLHSSSLVKPPAPKTGSIQNNMLTVNLVKQHTGKPESTLETSVYQDTGIGDFHTCFEDLNSTTITLTTSNSESIHQSLETQDVLEVTTNHLANPDFTSNSMEIKSAQENPFLFSTINQTVEELNTSKESVIAIFVPAENSKPSVNSFISTQKETMEMEDIDIEDSLYKDVDYGTEVLQIEHSYCRQDINKEHLWQKVFKLHSKITLLELKEQQTLGRLKSLEALVRQLKQENWLSEENVKIIENHFTTYEVTMI.

The THAP-type zinc-finger motif lies at 2–85 (MPRYCAAICC…LKQTAVPTIF (84 aa)). The segment at 86–113 (SLPEDNQGKDPSKKKSQKKNLEDEKEVC) is disordered. Basic and acidic residues predominate over residues 91 to 113 (NQGKDPSKKKSQKKNLEDEKEVC). Residues 322-325 (EHSY) carry the HCFC1-binding motif (HBM) motif. Residues 349–382 (LELKEQQTLGRLKSLEALVRQLKQENWLSEENVK) are a coiled coil.

As to quaternary structure, interacts with HTRA2; under apoptotic conditions. Interacts with ABRAXAS2. In terms of processing, cleaved by HTRA2 during apoptosis.

The protein resides in the nucleus. Its function is as follows. Has sequence-specific DNA-binding activity and can function as transcriptional repressor (in vitro). May be a regulator of cell cycle: THAP5 overexpression in human cell lines causes cell cycle arrest at G2/M phase. In Macaca fascicularis (Crab-eating macaque), this protein is THAP domain-containing protein 5 (THAP5).